We begin with the raw amino-acid sequence, 89 residues long: uncharacterized protein (89 aa).

An N-terminal signal peptide occupies residues 1–27; sequence MKKAAAVLLSLGLVFGFSYGAGHVAEA.

This is an uncharacterized protein from Bacillus subtilis (strain 168).